The chain runs to 169 residues: MGDAIRIIGIDPGLRRTGWGIVESLGNSLRFVASGTVRSEDKAALATRLCQLHDGLAEVLHAAMPHEAAVEQTFVNKDAVATLKLGQARGIAMLVPARAGLVVAEYAPNAVKKAVIGVGHGDKKQIHMMVKVLLPKATFDTEHAADALAIAICHAHHRQSAAYRMALAG.

Catalysis depends on residues aspartate 11, glutamate 71, and histidine 143. Residues aspartate 11, glutamate 71, and histidine 143 each contribute to the Mg(2+) site.

Belongs to the RuvC family. Homodimer which binds Holliday junction (HJ) DNA. The HJ becomes 2-fold symmetrical on binding to RuvC with unstacked arms; it has a different conformation from HJ DNA in complex with RuvA. In the full resolvosome a probable DNA-RuvA(4)-RuvB(12)-RuvC(2) complex forms which resolves the HJ. The cofactor is Mg(2+).

The protein resides in the cytoplasm. The enzyme catalyses Endonucleolytic cleavage at a junction such as a reciprocal single-stranded crossover between two homologous DNA duplexes (Holliday junction).. In terms of biological role, the RuvA-RuvB-RuvC complex processes Holliday junction (HJ) DNA during genetic recombination and DNA repair. Endonuclease that resolves HJ intermediates. Cleaves cruciform DNA by making single-stranded nicks across the HJ at symmetrical positions within the homologous arms, yielding a 5'-phosphate and a 3'-hydroxyl group; requires a central core of homology in the junction. The consensus cleavage sequence is 5'-(A/T)TT(C/G)-3'. Cleavage occurs on the 3'-side of the TT dinucleotide at the point of strand exchange. HJ branch migration catalyzed by RuvA-RuvB allows RuvC to scan DNA until it finds its consensus sequence, where it cleaves and resolves the cruciform DNA. This chain is Crossover junction endodeoxyribonuclease RuvC, found in Mesorhizobium japonicum (strain LMG 29417 / CECT 9101 / MAFF 303099) (Mesorhizobium loti (strain MAFF 303099)).